A 264-amino-acid chain; its full sequence is Short chain dehydrogenase/reductase nsrJ (264 aa).

4 residues coordinate NADP(+): Ile-24, Asp-70, Asn-97, and Arg-130. Residues Ser-146 and Ser-147 each act as proton donor in the active site. The NADP(+) site is built by Tyr-161, Lys-165, and Thr-196. Residue Tyr-161 is the Proton acceptor of the active site. The active-site Lowers pKa of active site Tyr is the Lys-165.

This sequence belongs to the short-chain dehydrogenases/reductases (SDR) family.

It participates in secondary metabolite biosynthesis. Short chain dehydrogenase/reductase; part of the gene cluster that mediates the biosynthesis of the tetrahydroxanthone dimer neosartorin, which exhibits antibacterial activity. The two different monomeric units appear to be synthesized by the same set of enzymes, among which the Baeyer-Villiger monooxygenase nsrF is the key enzyme for the divergence of the biosynthetic routes. The pathway begins with the synthesis of atrochrysone thioester by the polyketide synthase nsrB. The atrochrysone carboxyl ACP thioesterase nsrC then breaks the thioester bond and releases the atrochrysone carboxylic acid from AacuL. Atrochrysone carboxylic acid is decarboxylated by the decarboxylase nsrE, and oxidized by the anthrone oxygenase nsrD to yield emodin. Emodin is then reduced to emodin hydroquinone by the oxidoreductase nsrR. A-ring reduction by the short chain dehydrogenase nsrJ, dehydration by the scytalone dehydratase-like protein nsrI and probable spontaneous re-oxidation, results in overall deoxygenation to chrysophanol. The Baeyer-Villiger monooxygenase nsrF accepts chrysophanol as a substrate to insert one oxygen atom at two different positions to yield the precursors of both monomric units. NsrF is promiscuous/flexible in interacting with the 2 (non methylated and methylated) aromatic rings of chrysophanol, thus diverging the biosynthetic pathway at this point. After the hydrolysis of the lactones, methylesterification by the methyltransferase nsrG yields respectively moniliphenone and 2,2',6'-trihydroxy-4-methyl-6-methoxya-cyldiphenylmethanone. The next steps are the hydroxylation by the FAD-dependent monooxygenase nsrK, followed by isomerization by the monooxygenase nsrQ. The short chain dehydrogenase/reductase nsrO then catalyzes the C-5 ketoreduction to give the xanthone skeleton of blennolide C and 5-acetylblennolide A. The acetyltransferase nsrL has a strict substrate specificity and uses only blennolide A but not blennolide C to yield 5-acetylblennolide A as the single-acetylated product. In the final step of the biosynthesis, the heterodimerization of the 2 xanthones, blennolide C and 5-acetylblennolide A, is catalyzed by the cytochrome P450 monooxygenase nsrP. NsrP can utilize at least three different xanthones as its substrates to perform the dimerization reaction. This Aspergillus novofumigatus (strain IBT 16806) protein is Short chain dehydrogenase/reductase nsrJ.